The sequence spans 333 residues: Homeobox protein SIX3 (333 aa).

The segment covering 57–71 has biased composition (gly residues); the sequence is GGAGGAGGGSGGGGS. 3 disordered regions span residues 57 to 76, 233 to 252, and 259 to 333; these read GGAGGAGGGSGGGGSRAPPE, NPSKKRELAQATGLTPTQVG, and RQRD…ECDV. The segment at 73-120 is interaction with TLE5; sequence APPEELSMFQLPTLNFSPEQVASVCETLEETGDIERLGRFLWSLPVAP. Residues 207 to 266 constitute a DNA-binding region (homeobox); sequence GEQKTHCFKERTRSLLREWYLQDPYPNPSKKRELAQATGLTPTQVGNWFKNRRQRDRAAA. A bind to RHO promoter region spans residues 233–235; the sequence is NPS. Over residues 294-310 the composition is skewed to low complexity; the sequence is SAESPSTAASPTTSVSS. Residues 317 to 333 show a composition bias toward polar residues; sequence TGTSILSVTSSDSECDV.

Belongs to the SIX/Sine oculis homeobox family. As to quaternary structure, interacts with EYA4; translocates EYA4 from the cytoplasm to the nucleus and promotes activation of their target genes. Interacts with MTA1 and HDAC2; represses its own transcription. Interacts with MTA1; facilitates the binding of SIX3 to the core DNA motif of SIX3 promoter. Interacts with EYA1; promotes EYA1 translocation to the nucleus. Interacts with TLE1 and TLE5 (via Q domain); can act in combination with either TLE1 and/or TLE5 leading to transcriptional repression or activation, respectively. Interacts (via homeobox) with NR4A3; differentially regulates the transcriptional activities NR4A3. Interacts with GMNN. Interacts with TLE4. Expressed in ependymal cells during the formation of the lateral wall.

It localises to the nucleus. In terms of biological role, transcriptional regulator which can act as both a transcriptional repressor and activator by binding a ATTA homeodomain core recognition sequence on these target genes. During forebrain development represses WNT1 expression allowing zona limitans intrathalamica formation and thereby ensuring proper anterio-posterior patterning of the diencephalon and formation of the rostral diencephalon. Acts as a direct upstream activator of SHH expression in the rostral diencephalon ventral midline and that in turn SHH maintains its expression. In addition, Six3 activity is required for the formation of the telencephalon. During postnatal stages of brain development is necessary for ependymal cell maturation by promoting the maturation of radial glia into ependymal cells through regulation of neuroblast proliferation and migration. Acts on the proliferation and differentiation of neural progenitor cells through activating transcription of CCND1 AND CCND2. During early lens formation plays a role in lens induction and specification by activating directly PAX6 in the presumptive lens ectoderm. In turn PAX6 activates SIX3 resulting in activation of PDGFRA and CCND1 promoting cell proliferation. Also is required for the neuroretina development by directly suppressing WNT8B expression in the anterior neural plate territory. Its action during retina development and lens morphogenesis is TLE5 and TLE4-dependent manner. Furthermore, during eye development regulates several genes expression. Before and during early lens development represses the CRYGF promoter by binding a SIX repressor element. Directly activates RHO transcription, or cooperates with CRX or NRL. Six3 also functions in the formation of the proximodistal axis of the optic cup, and promotes the formation of optic vesicles-like structures. During pituitary development, acts in parallel or alternatively with HESX1 to control cell proliferation through Wnt/beta-catenin pathway. Plays a role in eye development by suppressing WNT1 expression and in dorsal-ventral patterning by repressing BMP signaling pathway. The chain is Homeobox protein SIX3 (Six3) from Mus musculus (Mouse).